A 200-amino-acid chain; its full sequence is 3-isopropylmalate dehydratase small subunit (200 aa).

This sequence belongs to the LeuD family. LeuD type 1 subfamily. Heterodimer of LeuC and LeuD.

It catalyses the reaction (2R,3S)-3-isopropylmalate = (2S)-2-isopropylmalate. Its pathway is amino-acid biosynthesis; L-leucine biosynthesis; L-leucine from 3-methyl-2-oxobutanoate: step 2/4. In terms of biological role, catalyzes the isomerization between 2-isopropylmalate and 3-isopropylmalate, via the formation of 2-isopropylmaleate. The chain is 3-isopropylmalate dehydratase small subunit from Haemophilus influenzae (strain 86-028NP).